Here is a 251-residue protein sequence, read N- to C-terminus: Ubiquinone/menaquinone biosynthesis C-methyltransferase UbiE (251 aa).

Residues Thr-74, Asp-95, and 123–124 each bind S-adenosyl-L-methionine; that span reads NA.

Belongs to the class I-like SAM-binding methyltransferase superfamily. MenG/UbiE family.

It catalyses the reaction a 2-demethylmenaquinol + S-adenosyl-L-methionine = a menaquinol + S-adenosyl-L-homocysteine + H(+). The catalysed reaction is a 2-methoxy-6-(all-trans-polyprenyl)benzene-1,4-diol + S-adenosyl-L-methionine = a 5-methoxy-2-methyl-3-(all-trans-polyprenyl)benzene-1,4-diol + S-adenosyl-L-homocysteine + H(+). Its pathway is quinol/quinone metabolism; menaquinone biosynthesis; menaquinol from 1,4-dihydroxy-2-naphthoate: step 2/2. The protein operates within cofactor biosynthesis; ubiquinone biosynthesis. Its function is as follows. Methyltransferase required for the conversion of demethylmenaquinol (DMKH2) to menaquinol (MKH2) and the conversion of 2-polyprenyl-6-methoxy-1,4-benzoquinol (DDMQH2) to 2-polyprenyl-3-methyl-6-methoxy-1,4-benzoquinol (DMQH2). This is Ubiquinone/menaquinone biosynthesis C-methyltransferase UbiE from Shewanella sp. (strain ANA-3).